We begin with the raw amino-acid sequence, 291 residues long: NAD kinase (291 aa).

The active-site Proton acceptor is Asp73. NAD(+)-binding positions include 73 to 74, 147 to 148, Arg175, Asp177, 188 to 193, Ala212, and Gln246; these read DG, ND, and TAYALS.

This sequence belongs to the NAD kinase family. A divalent metal cation is required as a cofactor.

It localises to the cytoplasm. The catalysed reaction is NAD(+) + ATP = ADP + NADP(+) + H(+). Its function is as follows. Involved in the regulation of the intracellular balance of NAD and NADP, and is a key enzyme in the biosynthesis of NADP. Catalyzes specifically the phosphorylation on 2'-hydroxyl of the adenosine moiety of NAD to yield NADP. The chain is NAD kinase from Polaromonas sp. (strain JS666 / ATCC BAA-500).